Here is a 447-residue protein sequence, read N- to C-terminus: Phospholipase A(1) DAD1, chloroplastic (447 aa).

Residues 1-46 (MRFSLSPVRPHSVVVPSLPKQDVVSYISGTTSNRQCRCVLTLPSPS) constitute a chloroplast transit peptide. The GXSXG signature appears at 293-297 (GHSLG). S295 (acyl-ester intermediate) is an active-site residue. Residues D352 and H418 each act as charge relay system in the active site.

The protein belongs to the AB hydrolase superfamily. Lipase family. Expressed in flower buds, but not in leaves or roots. Restricted to the stamen filaments immediately before flower opening.

Its subcellular location is the plastid. The protein localises to the chloroplast. It carries out the reaction a 1,2-diacyl-sn-glycero-3-phosphocholine + H2O = a 2-acyl-sn-glycero-3-phosphocholine + a fatty acid + H(+). The enzyme catalyses 1-hexadecanoyl-2-(9Z,12Z-octadecadienoyl)-sn-glycero-3-phosphocholine + H2O = 2-(9Z,12Z-octadecadienoyl)-sn-glycero-3-phosphocholine + hexadecanoate + H(+). Its function is as follows. Sn-1-specific phospholipase that releases free fatty acids from phospholipids. Low activity on galactolipids and triacylglycerols. Catalyzes the initial step of jasmonic acid biosynthesis. Not essential for jasmonate biosynthesis after wounding or upon pathogen infection. This chain is Phospholipase A(1) DAD1, chloroplastic, found in Arabidopsis thaliana (Mouse-ear cress).